A 635-amino-acid polypeptide reads, in one-letter code: tRNA uridine 5-carboxymethylaminomethyl modification enzyme MnmG (635 aa).

19–24 lines the FAD pocket; it reads GAGHAG. An NAD(+)-binding site is contributed by 280 to 294; the sequence is GPRYCPSIEDKIVRF.

It belongs to the MnmG family. In terms of assembly, homodimer. Heterotetramer of two MnmE and two MnmG subunits. FAD serves as cofactor.

The protein resides in the cytoplasm. NAD-binding protein involved in the addition of a carboxymethylaminomethyl (cmnm) group at the wobble position (U34) of certain tRNAs, forming tRNA-cmnm(5)s(2)U34. This Synechocystis sp. (strain ATCC 27184 / PCC 6803 / Kazusa) protein is tRNA uridine 5-carboxymethylaminomethyl modification enzyme MnmG.